Reading from the N-terminus, the 443-residue chain is Probable lipase C16A3.12c (443 aa).

Residues 1-16 are Cytoplasmic-facing; sequence MSGFNKNQIYWGDYVG. The chain crosses the membrane as a helical; Signal-anchor for type II membrane protein span at residues 17–37; it reads VIAAFVGVYTELVARIFIYMI. At 38 to 443 the chain is on the lumenal side; the sequence is PERVREWFRV…KHFVKQNGFH (406 aa). The AB hydrolase-1 domain occupies 116 to 410; it reads VVYCHHGLMT…HYEHLDFLWG (295 aa). N-linked (GlcNAc...) asparagine glycosylation is found at Asn-134 and Asn-177. Ser-210 acts as the Nucleophile in catalysis. Residues Asn-304 and Asn-335 are each glycosylated (N-linked (GlcNAc...) asparagine). Residues Asp-378 and His-404 each act as charge relay system in the active site.

Belongs to the AB hydrolase superfamily. Lipase family.

It localises to the cytoplasm. It is found in the vacuole. The protein resides in the membrane. Functionally, probable lipase. This is Probable lipase C16A3.12c from Schizosaccharomyces pombe (strain 972 / ATCC 24843) (Fission yeast).